Consider the following 298-residue polypeptide: Tryptophan 2,3-dioxygenase (298 aa).

Substrate contacts are provided by residues F51–H55, Y113, and R117. A heme-binding site is contributed by H240. A substrate-binding site is contributed by T254.

This sequence belongs to the tryptophan 2,3-dioxygenase family. Homotetramer. Requires heme as cofactor.

It catalyses the reaction L-tryptophan + O2 = N-formyl-L-kynurenine. It participates in amino-acid degradation; L-tryptophan degradation via kynurenine pathway; L-kynurenine from L-tryptophan: step 1/2. Functionally, heme-dependent dioxygenase that catalyzes the oxidative cleavage of the L-tryptophan (L-Trp) pyrrole ring and converts L-tryptophan to N-formyl-L-kynurenine. Catalyzes the oxidative cleavage of the indole moiety. In Xanthomonas euvesicatoria pv. vesicatoria (strain 85-10) (Xanthomonas campestris pv. vesicatoria), this protein is Tryptophan 2,3-dioxygenase.